A 165-amino-acid chain; its full sequence is Cyclic pyranopterin monophosphate synthase (165 aa).

Substrate contacts are provided by residues 76-78 and 119-120; these read LCH and ME. Aspartate 134 is a catalytic residue.

Belongs to the MoaC family. Homohexamer; trimer of dimers.

It carries out the reaction (8S)-3',8-cyclo-7,8-dihydroguanosine 5'-triphosphate = cyclic pyranopterin phosphate + diphosphate. It functions in the pathway cofactor biosynthesis; molybdopterin biosynthesis. Catalyzes the conversion of (8S)-3',8-cyclo-7,8-dihydroguanosine 5'-triphosphate to cyclic pyranopterin monophosphate (cPMP). This is Cyclic pyranopterin monophosphate synthase from Photobacterium profundum (strain SS9).